The sequence spans 281 residues: Probable endonuclease 4 (281 aa).

Residues His69, His109, Glu145, Asp179, His182, His216, Asp229, His231, and Glu261 each coordinate Zn(2+).

The protein belongs to the AP endonuclease 2 family. Zn(2+) serves as cofactor.

It carries out the reaction Endonucleolytic cleavage to 5'-phosphooligonucleotide end-products.. Endonuclease IV plays a role in DNA repair. It cleaves phosphodiester bonds at apurinic or apyrimidinic (AP) sites, generating a 3'-hydroxyl group and a 5'-terminal sugar phosphate. The protein is Probable endonuclease 4 of Aeromonas hydrophila subsp. hydrophila (strain ATCC 7966 / DSM 30187 / BCRC 13018 / CCUG 14551 / JCM 1027 / KCTC 2358 / NCIMB 9240 / NCTC 8049).